We begin with the raw amino-acid sequence, 236 residues long: Cell division protein FtsQ (236 aa).

The Cytoplasmic segment spans residues 1-14; it reads MWDNHQALNQVADW. A helical transmembrane segment spans residues 15 to 37; the sequence is LFTLAGLTTIYLMVQWTIHLPLL. In terms of domain architecture, POTRA spans 37-111; the sequence is LPLKEVHIRS…NGLDVVVEEH (75 aa). Over 38-236 the chain is Periplasmic; it reads PLKEVHIRSN…VSGFAARGTR (199 aa).

It belongs to the FtsQ/DivIB family. FtsQ subfamily. As to quaternary structure, part of a complex composed of FtsB, FtsL and FtsQ.

It is found in the cell inner membrane. Essential cell division protein. May link together the upstream cell division proteins, which are predominantly cytoplasmic, with the downstream cell division proteins, which are predominantly periplasmic. May control correct divisome assembly. The protein is Cell division protein FtsQ of Nitrosospira multiformis (strain ATCC 25196 / NCIMB 11849 / C 71).